Here is a 122-residue protein sequence, read N- to C-terminus: Large ribosomal subunit protein uL18 (122 aa).

It belongs to the universal ribosomal protein uL18 family. Part of the 50S ribosomal subunit; part of the 5S rRNA/L5/L18/L25 subcomplex. Contacts the 5S and 23S rRNAs.

In terms of biological role, this is one of the proteins that bind and probably mediate the attachment of the 5S RNA into the large ribosomal subunit, where it forms part of the central protuberance. This Dictyoglomus turgidum (strain DSM 6724 / Z-1310) protein is Large ribosomal subunit protein uL18.